The following is a 634-amino-acid chain: Chaperone protein HtpG (634 aa).

An a; substrate-binding region spans residues 1–344 (MSETATQNKE…SNDLPLNVSR (344 aa)). Positions 345–561 (EILQDNKVTQ…DFEMGTQMAK (217 aa)) are b. A c region spans residues 562 to 634 (LLEAAGQAAP…GAINELLTKR (73 aa)).

This sequence belongs to the heat shock protein 90 family. In terms of assembly, homodimer.

The protein localises to the cytoplasm. In terms of biological role, molecular chaperone. Has ATPase activity. This is Chaperone protein HtpG from Vibrio atlanticus (strain LGP32) (Vibrio splendidus (strain Mel32)).